The following is a 304-amino-acid chain: Polyisoprenyl-teichoic acid--peptidoglycan teichoic acid transferase TagU (304 aa).

Residues 1–3 (MKK) lie on the Cytoplasmic side of the membrane. The helical; Signal-anchor for type II membrane protein transmembrane segment at 4 to 24 (ALIAIGLILGTITVAIIGYGI) threads the bilayer. Topologically, residues 25 to 304 (YLYSSIQNTA…GELKSHLELS (280 aa)) are extracellular.

It belongs to the LytR/CpsA/Psr (LCP) family.

Its subcellular location is the cell membrane. Its pathway is cell wall biogenesis. In terms of biological role, may catalyze the final step in cell wall teichoic acid biosynthesis, the transfer of the anionic cell wall polymers (APs) from their lipid-linked precursor to the cell wall peptidoglycan (PG). The sequence is that of Polyisoprenyl-teichoic acid--peptidoglycan teichoic acid transferase TagU from Halalkalibacterium halodurans (strain ATCC BAA-125 / DSM 18197 / FERM 7344 / JCM 9153 / C-125) (Bacillus halodurans).